A 277-amino-acid polypeptide reads, in one-letter code: MAISSNTSRTTRKLLWTLFWCVLAFVYLFPYTWMVLTGFRHGVDTISMPPRFIFEPTLAGFKHLFEVTGFQKYIINSAVVTIVSVVLVIAVSAPAAYALAHVTKRGGTLLVAILVARIIPGIAIGVPVYLLATRLHQLDTYQALIIINVAVNIPFAIWLMRSFFMEVHPTLREAAISDGCSEWQVFTKIMMPLVLGGMLATAVFVFIAVWNEFLFALILTTSVSPTAPLAMLGFRTQYGVQWDAVGAAAFLVSTPVIAFAFIMQRYLVQGLTMGSVK.

7 consecutive transmembrane segments (helical) span residues 15–35 (LWTL…TWMV), 79–99 (VVTI…AYAL), 109–129 (LLVA…VPVY), 140–160 (TYQA…IWLM), 189–209 (IMMP…FIAV), 213–233 (FLFA…AMLG), and 242–262 (WDAV…FAFI). An ABC transmembrane type-1 domain is found at 74–263 (IINSAVVTIV…TPVIAFAFIM (190 aa)).

This sequence belongs to the binding-protein-dependent transport system permease family. MalFG subfamily.

It is found in the cell inner membrane. Its function is as follows. Probably part of the binding-protein-dependent transport system y4oPQRS. This system probably transports a sugar-like molecule. Probably responsible for the translocation of the substrate across the membrane. In Sinorhizobium fredii (strain NBRC 101917 / NGR234), this protein is Probable ABC transporter permease protein y4oR.